A 400-amino-acid polypeptide reads, in one-letter code: Diphosphomevalonate decarboxylase (400 aa).

(R)-5-diphosphomevalonate is bound by residues 19 to 22, R75, 154 to 159, and T210; these read YWGK and SGSACR. Positions 381-400 are disordered; sequence DGPRTLGPEEALLSPDGLPK.

The protein belongs to the diphosphomevalonate decarboxylase family.

It carries out the reaction (R)-5-diphosphomevalonate + ATP = isopentenyl diphosphate + ADP + phosphate + CO2. Its pathway is isoprenoid biosynthesis; isopentenyl diphosphate biosynthesis via mevalonate pathway; isopentenyl diphosphate from (R)-mevalonate: step 3/3. Its function is as follows. Diphosphomevalonate decarboxylase; part of the second module of ergosterol biosynthesis pathway that includes the middle steps of the pathway. The second module involves the formation of farnesyl diphosphate, which is also an important intermediate in the biosynthesis of ubiquinone, dolichol, heme and prenylated proteins. This module also plays a key role in the biosynthesis of triterpenes such as ganoderic acids (GA), a group of highly oxygenated lanostane-type triterpenoids which are well recognized as a main group of unique bioactive compounds in the medicinal mushroom Ganoderma lucidum. Activity by the mevalonate kinase first converts mevalonate into 5-phosphomevalonate. 5-phosphomevalonate is then further converted to 5-diphosphomevalonate by the phosphomevalonate kinase. The diphosphomevalonate decarboxylase MVD then produces isopentenyl diphosphate. The isopentenyl-diphosphate delta-isomerase then catalyzes the 1,3-allylic rearrangement of the homoallylic substrate isopentenyl (IPP) to its highly electrophilic allylic isomer, dimethylallyl diphosphate (DMAPP). Finally the farnesyl diphosphate synthase FPS catalyzes the sequential condensation of isopentenyl pyrophosphate with dimethylallyl pyrophosphate, and then with the resultant geranylpyrophosphate to the ultimate product farnesyl pyrophosphate. The polypeptide is Diphosphomevalonate decarboxylase (Ganoderma lucidum (Ling zhi medicinal fungus)).